The following is a 219-amino-acid chain: Endonuclease III (219 aa).

Residues 117–136 (MEELLTLPGVARKTANVVLA) enclose the HhH domain. Positions 197, 204, 207, and 213 each coordinate [4Fe-4S] cluster.

The protein belongs to the Nth/MutY family. [4Fe-4S] cluster is required as a cofactor.

It carries out the reaction 2'-deoxyribonucleotide-(2'-deoxyribose 5'-phosphate)-2'-deoxyribonucleotide-DNA = a 3'-end 2'-deoxyribonucleotide-(2,3-dehydro-2,3-deoxyribose 5'-phosphate)-DNA + a 5'-end 5'-phospho-2'-deoxyribonucleoside-DNA + H(+). DNA repair enzyme that has both DNA N-glycosylase activity and AP-lyase activity. The DNA N-glycosylase activity releases various damaged pyrimidines from DNA by cleaving the N-glycosidic bond, leaving an AP (apurinic/apyrimidinic) site. The AP-lyase activity cleaves the phosphodiester bond 3' to the AP site by a beta-elimination, leaving a 3'-terminal unsaturated sugar and a product with a terminal 5'-phosphate. In Synechocystis sp. (strain ATCC 27184 / PCC 6803 / Kazusa), this protein is Endonuclease III.